The primary structure comprises 807 residues: Serine/threonine-protein kinase B-raf (807 aa).

Composition is skewed to low complexity over residues 1–15 (MAAL…GASL) and 110–128 (SVSS…SSSL). Disordered stretches follow at residues 1 to 36 (MAAL…YAGS) and 104 to 128 (GNGT…SSSL). The 73-residue stretch at 155–227 (PIVRVFLPNK…TGEELHVEVL (73 aa)) folds into the RBD domain. The segment at 234 to 280 (THNFVRKTFFTLAFCDFCRKLLFQGFRCQTCGYKFHQRCSTEVPLMC) adopts a Phorbol-ester/DAG-type zinc-finger fold. Residues H235, C248, C251, C261, C264, H269, C272, and C280 each contribute to the Zn(2+) site. A compositionally biased stretch (polar residues) spans 303-313 (EETTLGETTPA). Disordered stretches follow at residues 303–372 (EETT…VHIN) and 434–494 (STAG…EIPD). Over residues 314 to 328 (SGSYPSVPPSDSVGP) the composition is skewed to low complexity. Composition is skewed to basic and acidic residues over residues 348 to 363 (PADE…RDRS) and 463 to 487 (QRER…RDSS). Residues 497–757 (ITVGQRIGSG…PQILASIELL (261 aa)) enclose the Protein kinase domain. ATP-binding positions include 503 to 511 (IGSGSFGTV) and K523. D616 functions as the Proton acceptor in the catalytic mechanism. Residue S790 is modified to Phosphoserine; by MAPK1. T793 is subject to Phosphothreonine; by MAPK1.

This sequence belongs to the protein kinase superfamily. TKL Ser/Thr protein kinase family. RAF subfamily. Zn(2+) is required as a cofactor. Phosphorylated. In terms of tissue distribution, expressed preferentially in neural tissue.

The protein resides in the nucleus. It localises to the cytoplasm. The protein localises to the cell membrane. It carries out the reaction L-seryl-[protein] + ATP = O-phospho-L-seryl-[protein] + ADP + H(+). It catalyses the reaction L-threonyl-[protein] + ATP = O-phospho-L-threonyl-[protein] + ADP + H(+). Its activity is regulated as follows. In quiescent cells, maintained in an inactive state via an intramolecular interaction between the protein kinase and N-terminal domains. Following mitogen-mediated cell activation, binds via its RGB domain to active HRAS (GTP-bound) which releases the inhibitory intramolecular interaction between the two domains. This allows the MAP2K1-mediated dimerization of KSR1 or KSR2, and BRAF which activates BRAF. In terms of biological role, protein kinase involved in the activation of the MAP signaling cascade. May play a role in transducing specific signals in neural cells. In Coturnix japonica (Japanese quail), this protein is Serine/threonine-protein kinase B-raf.